Reading from the N-terminus, the 1111-residue chain is NBPF family member NBPF9 (1111 aa).

A coiled-coil region spans residues 70-130 (MLRNERQFKE…RSLNEHLQAL (61 aa)). Positions 161–198 (KLSPENDEDEDEDVQVEEDEKVLESSAPREVQKAEESK) are disordered. Over residues 165–181 (ENDEDEDEDVQVEEDEK) the composition is skewed to acidic residues. The Olduvai 1 domain occupies 165-259 (ENDEDEDEDV…ECQDALNILP (95 aa)). The stretch at 341–401 (MLRNERQFKE…RSLNEHLQAL (61 aa)) forms a coiled coil. Olduvai domains lie at 436–528 (ENDN…HIIP), 529–600 (ENES…VDIG), 601–692 (RHRW…PSCP), 695–750 (SREL…LDLD), 751–843 (RIKK…RSKK), 844–919 (KRRR…LDVD), 920–1012 (RIKK…RSKK), and 1013–1111 (ERRR…IFPQ). 2 disordered regions span residues 451–474 (EKVQKSSAPREMQKAEEKEVPEDS) and 510–569 (TLIG…STPS). 2 stretches are compositionally biased toward acidic residues: residues 530–539 (NESDDEEEEE) and 550–562 (ESEEEEVPQESWD). 2 disordered regions span residues 829-871 (KKGK…LDEK) and 999-1033 (KGKGKKRRGRRSKKERRRGRKEGEEDQNPPCPRLN). Basic residues-rich tracts occupy residues 831–849 (GKGKKRRGRRSKKKRRRGR) and 1000–1018 (GKGKKRRGRRSKKERRRGR).

This sequence belongs to the NBPF family. As to expression, expressed in a neuroblastoma cell line.

The protein resides in the cytoplasm. This is NBPF family member NBPF9 from Homo sapiens (Human).